The following is a 183-amino-acid chain: SAGA-associated factor 11 homolog (183 aa).

An SGF11-type zinc finger spans residues 98-119 (CSCPNCNRIVAASRFAPHLEKC). Residues 140 to 167 (GGNYFGADEDDEDDADWSGEKRKKKIAP) form a disordered region. Residues 146-156 (ADEDDEDDADW) show a composition bias toward acidic residues.

The protein belongs to the SGF11 family. Component of some SAGA transcription coactivator-HAT complexes. Within the SAGA complex, participates in a subcomplex of SAGA called the DUB module (deubiquitination module).

The protein localises to the nucleus. In terms of biological role, component of the transcription regulatory histone acetylation (HAT) complex SAGA, a multiprotein complex that activates transcription by remodeling chromatin and mediating histone acetylation and deubiquitination. Within the SAGA complex, participates in a subcomplex that specifically deubiquitinates histone H2B. The SAGA complex is recruited to specific gene promoters by activators, where it is required for transcription. This chain is SAGA-associated factor 11 homolog, found in Culex quinquefasciatus (Southern house mosquito).